The primary structure comprises 132 residues: Capsid protein (132 aa).

The protein belongs to the Leviviricetes capsid protein family. In terms of assembly, homodimer. The capsid protein dimer binds to the viral RNA via an operator hairpin, but also many other RNA sequences in the viral genome.

It localises to the virion. Functionally, capsid protein self-assembles to form an icosahedral capsid with a T=3 symmetry, about 26 nm in diameter, and consisting of 89 capsid proteins dimers (178 capsid proteins). Involved in viral genome encapsidation through the interaction between a capsid protein dimer and the multiple packaging signals present in the RNA genome. Binding of the capsid proteins to the viral RNA induces a conformational change required for efficient T=3 shell formation. The capsid also contains 1 copy of the A2 maturation protein. In terms of biological role, acts as a translational repressor of viral replicase synthesis late in infection. This latter function is the result of capsid protein interaction with an RNA hairpin which contains the replicase ribosome-binding site. The chain is Capsid protein from Enterobacteria phage SP (Bacteriophage SP).